Reading from the N-terminus, the 132-residue chain is Large ribosomal subunit protein bL19 (132 aa).

This sequence belongs to the bacterial ribosomal protein bL19 family.

In terms of biological role, this protein is located at the 30S-50S ribosomal subunit interface and may play a role in the structure and function of the aminoacyl-tRNA binding site. This Persephonella marina (strain DSM 14350 / EX-H1) protein is Large ribosomal subunit protein bL19.